A 507-amino-acid chain; its full sequence is FSD1-like protein (507 aa).

A coiled-coil region spans residues 70-109 (KQEQVRKSQELQSQLSQCNNALENSEELLEFATRSLDIKE). Positions 105-162 (LDIKEPEEFSKAARQIKDRVTMASAFRLSLKPKVSDNMTHLMVDFSQERQMLQTLKFL) constitute a COS domain. Positions 164-268 (VPKAPEIDPV…DPVTLETRAL (105 aa)) constitute a Fibronectin type-III domain. In terms of domain architecture, B30.2/SPRY spans 291–484 (DPTGGKGQES…LSTGMQVPSA (194 aa)). A disordered region spans residues 292–345 (PTGGKGQESKIKGKENKGSVHVTSLKKHTSGTPSPKRTSVGSRPPAVRGSRDRF). Positions 298–309 (QESKIKGKENKG) are enriched in basic and acidic residues. A compositionally biased stretch (polar residues) spans 321-332 (SGTPSPKRTSVG). A phosphoserine mark is found at S498 and S501.

The sequence is that of FSD1-like protein (Fsd1l) from Mus musculus (Mouse).